We begin with the raw amino-acid sequence, 1514 residues long: Neurexin-1 (1514 aa).

Residues 1–30 (MGTALVQRGGCCLLCLSLLLLGCWAELGSG) form the signal peptide. The 187-residue stretch at 31–217 (LEFPGAEGQW…PPNSGGGSPC (187 aa)) folds into the Laminin G-like 1 domain. The Extracellular portion of the chain corresponds to 31–1438 (LEFPGAEGQW…EVIRESSSTT (1408 aa)). N-linked (GlcNAc...) asparagine glycosylation is found at Asn-125 and Asn-190. The segment at 197–221 (VDGGEVKLDDEPPNSGGGSPCEAGE) is disordered. Residues 219–256 (AGEEGEGGVCLNGGVCSVVDDQAVCDCSRTGFRGKDCS) enclose the EGF-like 1 domain. Intrachain disulfides connect Cys-228-Cys-243 and Cys-245-Cys-255. 2 consecutive Laminin G-like domains span residues 283 to 480 (IATF…AFKC) and 487 to 679 (DPIT…KPSC). Ca(2+) contacts are provided by Asp-329, Leu-346, and Met-414. Cystine bridges form between Cys-444–Cys-480, Cys-650–Cys-679, Cys-687–Cys-698, Cys-692–Cys-707, and Cys-709–Cys-719. The EGF-like 2 domain occupies 683–720 (TAKPCLSNPCKNNGMCRDGWNRYVCDCSGTGYLGRSCE). Laminin G-like domains are found at residues 725-898 (VLSY…IDYC) and 912-1087 (DPVT…ERGC). Ca(2+)-binding residues include Asp-772 and Leu-789. N-linked (GlcNAc...) asparagine glycosylation is present at Asn-797. Arg-848 is a Ca(2+) binding site. 5 disulfide bridges follow: Cys-890-Cys-898, Cys-1059-Cys-1087, Cys-1094-Cys-1105, Cys-1099-Cys-1114, and Cys-1116-Cys-1126. The EGF-like 3 domain maps to 1090–1127 (PSTTCQEDSCSNQGVCLQQWDGFSCDCSMTSFSGPLCN). The 199-residue stretch at 1133-1331 (YIFSKGGGQI…DANIAIVGNV (199 aa)) folds into the Laminin G-like 6 domain. The Ca(2+) site is built by Asp-1183 and Val-1200. N-linked (GlcNAc...) asparagine glycosylation occurs at Asn-1230. 2 residues coordinate Ca(2+): Ile-1282 and Asn-1284. O-linked (Xyl...) (heparan sulfate) serine glycosylation occurs at Ser-1392. Residues 1396 to 1427 (PSDDEDIDPCEPSSGGLANPTRVGGREPYPGS) are disordered. A helical membrane pass occupies residues 1439-1459 (GMVVGIVAAAALCILILLYAM). Residues 1460–1514 (YKYRNRDEGSYHVDESRNYISNSAQSNGAVVKEKQPSSAKSANKNKKNKDKEYYV) lie on the Cytoplasmic side of the membrane. The interaction with CASK stretch occupies residues 1481-1507 (NSAQSNGAVVKEKQPSSAKSANKNKKN). The interval 1481-1514 (NSAQSNGAVVKEKQPSSAKSANKNKKNKDKEYYV) is disordered.

Belongs to the neurexin family. Interacts (via laminin G-like domain 2 and/or laminin G-like domain 6) with NLGN1 forming a heterotetramer, where one NLGN1 dimer interacts with one NRXN1 dimer. Also interacts (via laminin G-like domain 2 and/or laminin G-like domain 6) with NLGN2, NLGN3 and NLGN4L; interactions with NLGN1, NLGN2, NLGN3 and NLGN4L are calcium-dependent. Interacts (via cytoplasmic C-terminal region) with CASK (via the PDZ, SH3 and guanylate kinase-like domains). Interacts (via cytoplasmic C-terminus) with CASKIN1 and APBA1. Interacts (via laminin G-like domain 2) with NXPH1 and NXPH3. Alpha-type isoforms (neurexin-1-alpha) interact (via laminin G-like domain 2 and/or laminin G-like domain 6) with DAG1 (via alpha-dystroglycan chain). Interacts with LRRTM1, LRRTM2, LRRTM3 and LRRTM4. Interacts with SYT13 and SYTL1. Interacts with CBLN1, CBLN2 and, less avidly, with CBLN4. Interacts with CLSTN3. In terms of processing, O-glycosylated; contains heparan sulfate. Heparan sulfate attachment is required for synapse development by mediating interactions with neuroligins and LRRTM2.

The protein localises to the presynaptic cell membrane. Functionally, cell surface protein involved in cell-cell-interactions, exocytosis of secretory granules and regulation of signal transmission. Function is isoform-specific. Alpha-type isoforms have a long N-terminus with six laminin G-like domains and play an important role in synaptic signal transmission. Alpha-type isoforms play a role in the regulation of calcium channel activity and Ca(2+)-triggered neurotransmitter release at synapses and at neuromuscular junctions. They play an important role in Ca(2+)-triggered exocytosis of secretory granules in pituitary gland. They may affect their functions at synapses and in endocrine cells via their interactions with proteins from the exocytotic machinery. Likewise, alpha-type isoforms play a role in regulating the activity of postsynaptic NMDA receptors, a subtype of glutamate-gated ion channels. Both alpha-type and beta-type isoforms may play a role in the formation or maintenance of synaptic junctions via their interactions (via the extracellular domains) with neuroligin family members, CBLN1 or CBLN2. In vitro, triggers the de novo formation of presynaptic structures. May be involved in specification of excitatory synapses. Alpha-type isoforms were first identified as receptors for alpha-latrotoxin from spider venom. This chain is Neurexin-1 (Nrxn1), found in Mus musculus (Mouse).